The chain runs to 157 residues: uncharacterized protein (157 aa).

One can recognise an N-acetyltransferase domain in the interval 9 to 146; sequence LLINYKTLDE…GDFYVWHPET (138 aa).

This is an uncharacterized protein from Bacillus anthracis (strain CDC 684 / NRRL 3495).